The chain runs to 104 residues: Large ribosomal subunit protein uL24 (104 aa).

The protein belongs to the universal ribosomal protein uL24 family. In terms of assembly, part of the 50S ribosomal subunit.

One of two assembly initiator proteins, it binds directly to the 5'-end of the 23S rRNA, where it nucleates assembly of the 50S subunit. Functionally, one of the proteins that surrounds the polypeptide exit tunnel on the outside of the subunit. The protein is Large ribosomal subunit protein uL24 of Yersinia pseudotuberculosis serotype O:1b (strain IP 31758).